Here is a 434-residue protein sequence, read N- to C-terminus: Nicotinate phosphoribosyltransferase (434 aa).

His242 is modified (phosphohistidine; by autocatalysis).

Belongs to the NAPRTase family. Transiently phosphorylated on a His residue during the reaction cycle. Phosphorylation strongly increases the affinity for substrates and increases the rate of nicotinate D-ribonucleotide production. Dephosphorylation regenerates the low-affinity form of the enzyme, leading to product release.

The catalysed reaction is nicotinate + 5-phospho-alpha-D-ribose 1-diphosphate + ATP + H2O = nicotinate beta-D-ribonucleotide + ADP + phosphate + diphosphate. The protein operates within cofactor biosynthesis; NAD(+) biosynthesis; nicotinate D-ribonucleotide from nicotinate: step 1/1. Catalyzes the synthesis of beta-nicotinate D-ribonucleotide from nicotinate and 5-phospho-D-ribose 1-phosphate at the expense of ATP. The sequence is that of Nicotinate phosphoribosyltransferase from Mesorhizobium japonicum (strain LMG 29417 / CECT 9101 / MAFF 303099) (Mesorhizobium loti (strain MAFF 303099)).